We begin with the raw amino-acid sequence, 281 residues long: Urease accessory protein UreD (281 aa).

It belongs to the UreD family. UreD, UreF and UreG form a complex that acts as a GTP-hydrolysis-dependent molecular chaperone, activating the urease apoprotein by helping to assemble the nickel containing metallocenter of UreC. The UreE protein probably delivers the nickel.

The protein localises to the cytoplasm. Functionally, required for maturation of urease via the functional incorporation of the urease nickel metallocenter. The sequence is that of Urease accessory protein UreD from Pseudomonas savastanoi pv. phaseolicola (strain 1448A / Race 6) (Pseudomonas syringae pv. phaseolicola (strain 1448A / Race 6)).